Consider the following 660-residue polypeptide: UPF0603 protein MT2410 (660 aa).

The signal sequence occupies residues Met1–Ala26. The chain crosses the membrane as a helical span at residues Val162–Met182. Residues Asp488 to Ser567 adopt a coiled-coil conformation. Residues Gly605–Gly625 form a helical membrane-spanning segment. The interval Phe638–Phe660 is disordered.

This sequence belongs to the UPF0603 family.

The protein resides in the cell membrane. Its function is as follows. May play a role in septum formation. This Mycobacterium tuberculosis (strain CDC 1551 / Oshkosh) protein is UPF0603 protein MT2410.